A 402-amino-acid chain; its full sequence is Protein DesVIII (402 aa).

This sequence belongs to the cytochrome P450 family. In terms of assembly, forms a complex with DesVII.

It participates in antibiotic biosynthesis. Involved in the biosynthesis of the macrolide antibiotics methymycin, neomethymycin, narbomycin, and pikromycin. DesVIII assists the folding of the DesVII polypeptide. However, unlike chaperones, it remains bound to DesVII during catalysis, forming a tight DesVII/DesVIII complex. Although the formation of the DesVII/DesVIII complex is essential for the catalytic activity, DesVIII is unlikely to be involved in catalysis directly. The polypeptide is Protein DesVIII (Streptomyces venezuelae).